Here is a 141-residue protein sequence, read N- to C-terminus: Acetyltransferase YE1169 (141 aa).

One can recognise an N-acetyltransferase domain in the interval 1–141 (MEIRVFQQSD…GKRLIVDQEY (141 aa)).

It belongs to the acetyltransferase family. YpeA subfamily.

The polypeptide is Acetyltransferase YE1169 (Yersinia enterocolitica serotype O:8 / biotype 1B (strain NCTC 13174 / 8081)).